The primary structure comprises 234 residues: MSKKITKRMQALLDKVDTQKVYDITTASVSVKSLASAKFDETVEVALKLGVDPRHADQMIRGAVVLPHGTGKKVRVAVFAKGVKADEAKAAGADVVGDDDLAEEIKNGNINFDIVIATPDMMALVGKVGRILGPKGLMPNPKTGTVTADVTKAVNNVKSGQVNFRVDKKGNIHAPVGKASFDAEKIKENVLELVKMINRLKPATAKGKYIRHAAISLTMSPSLELDAQELMDAR.

This sequence belongs to the universal ribosomal protein uL1 family. Part of the 50S ribosomal subunit.

Binds directly to 23S rRNA. The L1 stalk is quite mobile in the ribosome, and is involved in E site tRNA release. Functionally, protein L1 is also a translational repressor protein, it controls the translation of the L11 operon by binding to its mRNA. In Wolinella succinogenes (strain ATCC 29543 / DSM 1740 / CCUG 13145 / JCM 31913 / LMG 7466 / NCTC 11488 / FDC 602W) (Vibrio succinogenes), this protein is Large ribosomal subunit protein uL1.